A 401-amino-acid polypeptide reads, in one-letter code: Arylacetamide deacetylase-like 2 (401 aa).

An N-terminal signal peptide occupies residues 1–18 (MGLKALCLGLLCVLFVSH). The short motif at 111–113 (HGG) is the Involved in the stabilization of the negatively charged intermediate by the formation of the oxyanion hole element. An intrachain disulfide couples cysteine 116 to cysteine 338. Catalysis depends on residues serine 189, aspartate 341, and histidine 371.

Belongs to the 'GDXG' lipolytic enzyme family.

It is found in the secreted. The protein is Arylacetamide deacetylase-like 2 (AADACL2) of Homo sapiens (Human).